A 75-amino-acid chain; its full sequence is ATP synthase subunit c (75 aa).

2 consecutive transmembrane segments (helical) span residues 8-28 (FIAIGLAVFGMLGAGLGIANI) and 52-72 (IGAAMVEIMGLLAFVLAMLLI).

The protein belongs to the ATPase C chain family. As to quaternary structure, F-type ATPases have 2 components, F(1) - the catalytic core - and F(0) - the membrane proton channel. F(1) has five subunits: alpha(3), beta(3), gamma(1), delta(1), epsilon(1). F(0) has three main subunits: a(1), b(2) and c(10-14). The alpha and beta chains form an alternating ring which encloses part of the gamma chain. F(1) is attached to F(0) by a central stalk formed by the gamma and epsilon chains, while a peripheral stalk is formed by the delta and b chains.

The protein resides in the cell membrane. In terms of biological role, f(1)F(0) ATP synthase produces ATP from ADP in the presence of a proton or sodium gradient. F-type ATPases consist of two structural domains, F(1) containing the extramembraneous catalytic core and F(0) containing the membrane proton channel, linked together by a central stalk and a peripheral stalk. During catalysis, ATP synthesis in the catalytic domain of F(1) is coupled via a rotary mechanism of the central stalk subunits to proton translocation. Functionally, key component of the F(0) channel; it plays a direct role in translocation across the membrane. A homomeric c-ring of between 10-14 subunits forms the central stalk rotor element with the F(1) delta and epsilon subunits. In Wolbachia pipientis wMel, this protein is ATP synthase subunit c.